The sequence spans 182 residues: N-alpha-acetyltransferase daf-31 (182 aa).

The N-acetyltransferase domain maps to 1 to 152 (MNIRCARVDD…DAYAMRRDLA (152 aa)). The segment at 162 to 182 (PADREAYTTAKTTDDKKKNRS) is disordered.

The protein belongs to the acetyltransferase family. ARD1 subfamily. Component of the N-terminal acetyltransferase A (NatA) complex. In terms of tissue distribution, expressed in head and tail hypodermal cells, hypodermal seam cells, pharynx, intestine and head and tail neurons.

The catalysed reaction is N-terminal glycyl-[protein] + acetyl-CoA = N-terminal N(alpha)-acetylglycyl-[protein] + CoA + H(+). It carries out the reaction N-terminal L-alanyl-[protein] + acetyl-CoA = N-terminal N(alpha)-acetyl-L-alanyl-[protein] + CoA + H(+). It catalyses the reaction N-terminal L-seryl-[protein] + acetyl-CoA = N-terminal N(alpha)-acetyl-L-seryl-[protein] + CoA + H(+). The enzyme catalyses N-terminal L-valyl-[protein] + acetyl-CoA = N-terminal N(alpha)-acetyl-L-valyl-[protein] + CoA + H(+). The catalysed reaction is N-terminal L-cysteinyl-[protein] + acetyl-CoA = N-terminal N(alpha)-acetyl-L-cysteinyl-[protein] + CoA + H(+). It carries out the reaction N-terminal L-threonyl-[protein] + acetyl-CoA = N-terminal N(alpha)-acetyl-L-threonyl-[protein] + CoA + H(+). Its function is as follows. Catalytic subunit of the N-terminal acetyltransferase A (NatA) complex which displays alpha (N-terminal) acetyltransferase activity. Plays a role in regulating larval development, metabolism and longevity. Functions downstream or alongside daf-3, daf-12 and daf-16 in the dauer formation pathway. Functions upstream of daf-15 to enable animal development. In Caenorhabditis elegans, this protein is N-alpha-acetyltransferase daf-31.